Here is a 258-residue protein sequence, read N- to C-terminus: Distal membrane-arm assembly complex protein 2 (258 aa).

Belongs to the ATP synthase subunit s family. As to quaternary structure, interacts with incompletely assembled mitochondrial NADH:ubiquinone oxidoreductase complex (complex I).

It is found in the mitochondrion. Required for the assembly of the mitochondrial NADH:ubiquinone oxidoreductase complex (complex I). Involved in the assembly of the distal region of complex I. The sequence is that of Distal membrane-arm assembly complex protein 2 (Dmac2) from Mus musculus (Mouse).